A 448-amino-acid chain; its full sequence is N-succinylarginine dihydrolase (448 aa).

Substrate-binding positions include 19–28, Asn110, and 137–138; these read GGLSYGNVAS and HR. Glu174 is an active-site residue. Residue Arg214 coordinates substrate. Residue His250 is part of the active site. Substrate contacts are provided by Asp252 and Asn365. The active-site Nucleophile is Cys371.

The protein belongs to the succinylarginine dihydrolase family. In terms of assembly, homodimer.

The enzyme catalyses N(2)-succinyl-L-arginine + 2 H2O + 2 H(+) = N(2)-succinyl-L-ornithine + 2 NH4(+) + CO2. It participates in amino-acid degradation; L-arginine degradation via AST pathway; L-glutamate and succinate from L-arginine: step 2/5. In terms of biological role, catalyzes the hydrolysis of N(2)-succinylarginine into N(2)-succinylornithine, ammonia and CO(2). In Pseudomonas savastanoi pv. phaseolicola (strain 1448A / Race 6) (Pseudomonas syringae pv. phaseolicola (strain 1448A / Race 6)), this protein is N-succinylarginine dihydrolase.